A 201-amino-acid chain; its full sequence is Protein GrpE (201 aa).

A compositionally biased stretch (polar residues) spans 1 to 11; the sequence is MTDSTNNQGTS. Residues 1-40 are disordered; that stretch reads MTDSTNNQGTSGRPDDDHTTEEVASVFNDPGAQAPAGEPD.

Belongs to the GrpE family. As to quaternary structure, homodimer.

The protein resides in the cytoplasm. Functionally, participates actively in the response to hyperosmotic and heat shock by preventing the aggregation of stress-denatured proteins, in association with DnaK and GrpE. It is the nucleotide exchange factor for DnaK and may function as a thermosensor. Unfolded proteins bind initially to DnaJ; upon interaction with the DnaJ-bound protein, DnaK hydrolyzes its bound ATP, resulting in the formation of a stable complex. GrpE releases ADP from DnaK; ATP binding to DnaK triggers the release of the substrate protein, thus completing the reaction cycle. Several rounds of ATP-dependent interactions between DnaJ, DnaK and GrpE are required for fully efficient folding. This is Protein GrpE from Beijerinckia indica subsp. indica (strain ATCC 9039 / DSM 1715 / NCIMB 8712).